A 166-amino-acid chain; its full sequence is Large ribosomal subunit protein mL49 (166 aa).

It belongs to the mitochondrion-specific ribosomal protein mL49 family. As to quaternary structure, component of the mitochondrial ribosome large subunit (39S) which comprises a 16S rRNA and about 50 distinct proteins. Interacts with OXA1L.

It localises to the mitochondrion. The protein is Large ribosomal subunit protein mL49 (MRPL49) of Bos taurus (Bovine).